A 252-amino-acid chain; its full sequence is Hydrolase phiM (252 aa).

The active-site Charge relay system is the Ser-126.

This sequence belongs to the LovG family.

Its pathway is secondary metabolite biosynthesis. In terms of biological role, hydrolase; part of the gene cluster that mediates the biosynthesis of the antihypercholesterolemic agents phomoidrides which are dimeric anhydrides. Within the pathway, phiM releases the C12-fatty acyl chain from phiA. The pathway begins with the highly reducing polyketide synthase tstA that catalyzes the formation of a C12-fatty acyl-ACP, starting from one acetate and 5 malonate units. The hydrolase tstM is involved in the release of the C12-fatty acyl chain from phiA. The alkylcitrate synthase (ACS) tstJ and the alkylcitrate dehydratase (ACDH) tstI then give rise to decarboxylated monomeric anhydrides by coupling the C12-fatty acyl chain with oxalacetic acid. The cyclase tstC is responsible for the dimerization of the monomeric anhydrides which leads to the production of prephomoidride that contains the characteristic bicyclo[4.3.1]deca-1,6-diene system of phomoidrides. Iterative oxidation catalyzed by the alpha-ketoglutarate-dependent dioxygenase tstK produced then phomoidride A. Finally, the methyltransferase tstE converts phomoidride A to phomoidride B via an acetalization reaction. The phosphatidylethanolamine-binding protein tstB and tstN are not essential for dimerization and their functions have still to be determined. The chain is Hydrolase phiM from Talaromyces stipitatus (strain ATCC 10500 / CBS 375.48 / QM 6759 / NRRL 1006) (Penicillium stipitatum).